We begin with the raw amino-acid sequence, 234 residues long: t-SNARE protein aex-4 (234 aa).

2 consecutive t-SNARE coiled-coil homology domains span residues 37–99 (AKLN…ITAM) and 170–232 (DAIE…VKKL).

The protein belongs to the SNAP-25 family. In terms of tissue distribution, expressed in intestinal cells.

It localises to the cell membrane. Functionally, t-SNARE protein which regulates the secretion of aex-5 from intestinal cells. Involved in the defecation motor program, which is a coordinated series of three muscle contractions that occurs every 45 seconds. This chain is t-SNARE protein aex-4, found in Caenorhabditis elegans.